We begin with the raw amino-acid sequence, 245 residues long: Flavin-dependent thymidylate synthase (245 aa).

The ThyX domain occupies 6 to 220 (PRVELLAHTP…PELFAHAGAK (215 aa)). Residues Ser65, 89-91 (RHR), and Gln97 contribute to the FAD site. DUMP is bound by residues 86-89 (QLVR), 97-101 (QQSQR), and Arg159. The short motif at 89-99 (RHRIASFSQQS) is the ThyX motif element. Residues 175 to 177 (NCR) and His181 contribute to the FAD site. Residue Arg186 participates in dUMP binding. Arg186 functions as the Involved in ionization of N3 of dUMP, leading to its activation in the catalytic mechanism.

This sequence belongs to the thymidylate synthase ThyX family. In terms of assembly, homotetramer. It depends on FAD as a cofactor.

The enzyme catalyses dUMP + (6R)-5,10-methylene-5,6,7,8-tetrahydrofolate + NADPH + H(+) = dTMP + (6S)-5,6,7,8-tetrahydrofolate + NADP(+). It participates in pyrimidine metabolism; dTTP biosynthesis. Its function is as follows. Catalyzes the reductive methylation of 2'-deoxyuridine-5'-monophosphate (dUMP) to 2'-deoxythymidine-5'-monophosphate (dTMP) while utilizing 5,10-methylenetetrahydrofolate (mTHF) as the methyl donor, and NADPH and FADH(2) as the reductant. The polypeptide is Flavin-dependent thymidylate synthase (Nitratidesulfovibrio vulgaris (strain ATCC 29579 / DSM 644 / CCUG 34227 / NCIMB 8303 / VKM B-1760 / Hildenborough) (Desulfovibrio vulgaris)).